The following is a 634-amino-acid chain: Threonine--tRNA ligase (634 aa).

Positions 1-61 (MINIRFPDGS…NSNCELRLIT (61 aa)) constitute a TGS domain. Residues 241–532 (DHRKIGKVLD…LIEHYAGNLP (292 aa)) are catalytic. Zn(2+)-binding residues include Cys-332, His-383, and His-509.

The protein belongs to the class-II aminoacyl-tRNA synthetase family. Homodimer. Requires Zn(2+) as cofactor.

The protein localises to the cytoplasm. The catalysed reaction is tRNA(Thr) + L-threonine + ATP = L-threonyl-tRNA(Thr) + AMP + diphosphate + H(+). Functionally, catalyzes the attachment of threonine to tRNA(Thr) in a two-step reaction: L-threonine is first activated by ATP to form Thr-AMP and then transferred to the acceptor end of tRNA(Thr). Also edits incorrectly charged L-seryl-tRNA(Thr). This Francisella tularensis subsp. holarctica (strain OSU18) protein is Threonine--tRNA ligase.